The primary structure comprises 272 residues: MGRVRNRATAQRRRRKRPGDPPAACAAIAVMGASRAQCPRVQVGVGSHAAAKRWLGKLRRKRRWRRAREAGSRDPLPSAPLPDPPAPAESPKELDLGAQRERWETFRKLWGLSCEGAAKVLLDTFEYPGLVHHTGGCHCGAVRFAVWAPADLRVVDCSCRLCRKKQHRHFLVPASRFTLLQGAESIVTYRSNTHPALHSFCSRCGVQSFHAAVSDPRVYGVAPHCLDEGTVRSVVIEEVGGGDPGEEAAEEHKAIHKTSSQSAPACPREQEQ.

The segment covering 1–17 (MGRVRNRATAQRRRRKR) has biased composition (basic residues). Disordered stretches follow at residues 1-23 (MGRVRNRATAQRRRRKRPGDPPA) and 65-95 (RRAREAGSRDPLPSAPLPDPPAPAESPKELD). A compositionally biased stretch (pro residues) spans 77 to 88 (PSAPLPDPPAPA). Residues 133-246 (HTGGCHCGAV…EEVGGGDPGE (114 aa)) form the CENP-V/GFA domain. Zn(2+)-binding residues include Cys137, Cys139, Cys157, Cys159, Cys162, Cys201, and Cys204. The interval 240–272 (GGGDPGEEAAEEHKAIHKTSSQSAPACPREQEQ) is disordered.

The protein belongs to the Gfa family. It depends on Zn(2+) as a cofactor.

In Homo sapiens (Human), this protein is Centromere protein V-like protein 3.